Here is a 336-residue protein sequence, read N- to C-terminus: DNA topoisomerase 1B (336 aa).

In terms of domain architecture, Topo IB-type catalytic spans 79-336 (EIHIQGAEKE…KSYRKDVLGE (258 aa)). The active-site O-(3'-phospho-DNA)-tyrosine intermediate is Y294.

The protein belongs to the type IB topoisomerase family. Monomer.

The protein localises to the virion. It catalyses the reaction ATP-independent breakage of single-stranded DNA, followed by passage and rejoining.. Functionally, releases the supercoiling and torsional tension of DNA introduced during the DNA replication and transcription by transiently cleaving and rejoining one strand of the DNA duplex. Introduces a single-strand break via transesterification at a target site in duplex DNA. The scissile phosphodiester is attacked by the catalytic tyrosine of the enzyme, resulting in the formation of a DNA-(3'-phosphotyrosyl)-enzyme intermediate and the expulsion of a 5'-OH DNA strand. The free DNA strand then undergoes passage around the unbroken strand thus removing DNA supercoils. Finally, in the religation step, the DNA 5'-OH attacks the covalent intermediate to expel the active-site tyrosine and restore the DNA phosphodiester backbone. Cleaves DNA after CCCTT sequence. The polypeptide is DNA topoisomerase 1B (TOP1E) (Acanthamoeba polyphaga mimivirus (APMV)).